Reading from the N-terminus, the 776-residue chain is Systemic RNA interference defective protein 1 (776 aa).

An N-terminal signal peptide occupies residues 1-17 (MIRVYLIILMHLVIGLT). The Extracellular segment spans residues 18–319 (QNNSTTPSPI…ENQSYAVPTA (302 aa)). 8 N-linked (GlcNAc...) asparagine glycosylation sites follow: N19, N20, N32, N205, N210, N234, N290, and N311. The interval 22–312 (TTPSPIITSS…SFEFKKLENQ (291 aa)) is involved in dsRNA-binding. The chain crosses the membrane as a helical span at residues 320 to 340 (LMMIFLTTPCLLFLPIVINII). Residues 341–429 (KNSRKLAPSQ…KQDSLSLHGQ (89 aa)) lie on the Cytoplasmic side of the membrane. Positions 360–390 (PSEQRDMDLSHDEQQNTSSELENNGEIPAAE) are disordered. Basic and acidic residues predominate over residues 362 to 373 (EQRDMDLSHDEQ). Residues 430-450 (MLQYPVAIILPVLMHTAIEFH) form a helical membrane-spanning segment. At 451 to 481 (KWTTSTMANRDEMCFHNHACARPLGELRAWN) the chain is on the extracellular side. The chain crosses the membrane as a helical span at residues 482–502 (NIITNIGYTLYGAIFIVLSIC). Residues 503–510 (RRGRHEYS) lie on the Cytoplasmic side of the membrane. The chain crosses the membrane as a helical span at residues 511–531 (HVFGTYECTLLDVTIGVFMVL). Topologically, residues 532-543 (QSIASATYHICP) are extracellular. The helical transmembrane segment at 544 to 564 (SDVAFQFDTPCIQVICGLLMV) threads the bilayer. Over 565 to 575 (RQWFVRHESPS) the chain is Cytoplasmic. Residues 576-596 (PAYTNILLVGVVSLNFLISAF) form a helical membrane-spanning segment. Residues 597-599 (SKT) are Extracellular-facing. Residues 600-620 (SYVRFIIAVIHVIVVGSICLA) traverse the membrane as a helical segment. The Cytoplasmic segment spans residues 621 to 633 (KERSLGSEKLKTR). The chain crosses the membrane as a helical span at residues 634–654 (FFIMAFSMGNFAAIVMYLTLS). Residues 655–659 (AFHLN) lie on the Extracellular side of the membrane. The chain crosses the membrane as a helical span at residues 660-680 (QIATYCFIINCIMYLMYYGCM). Over 681-691 (KVLHSERITSK) the chain is Cytoplasmic. The helical transmembrane segment at 692–712 (AKLCGALSLLAWAVAGFFFFQ) threads the bilayer. The Extracellular segment spans residues 713–741 (DDTDWTRSAAASRALNKPCLLLGFFGSHD). A helical transmembrane segment spans residues 742–762 (LWHIFGALAGLFTFIFVSFVD). Residues 763-776 (DDLINTRKTSINIF) lie on the Cytoplasmic side of the membrane.

It belongs to the SID1 family. In terms of assembly, may self-associate to form multimers. Expressed in most non-neuronal cells, including body wall muscle cells.

The protein resides in the cell membrane. Its function is as follows. Plays a role in RNA-mediated gene silencing by acting cell-autonomously as a channel for the transport of double-stranded RNA (dsRNA) between cells. Mediates the spread of dsRNA and subsequent silencing of genes in cells distant from the site of dsRNA introduction. Selective for dsRNA. Preferentially binds long dsRNA, from 50 base pairs up to 700. Short 20 base-pair long molecules are not bound. May also bind dsDNA, but with lower affinity. Binding may be sequence-independent. Required for avoidance behavior induced by small RNAs derived from pathogenic bacteria such as P.aeruginosa. The chain is Systemic RNA interference defective protein 1 from Caenorhabditis elegans.